Reading from the N-terminus, the 296-residue chain is Homoserine kinase (296 aa).

Proline 84 to serine 94 is an ATP binding site.

Belongs to the GHMP kinase family. Homoserine kinase subfamily.

The protein localises to the cytoplasm. It carries out the reaction L-homoserine + ATP = O-phospho-L-homoserine + ADP + H(+). It participates in amino-acid biosynthesis; L-threonine biosynthesis; L-threonine from L-aspartate: step 4/5. Its function is as follows. Catalyzes the ATP-dependent phosphorylation of L-homoserine to L-homoserine phosphate. This chain is Homoserine kinase, found in Lactococcus lactis subsp. lactis (strain IL1403) (Streptococcus lactis).